A 906-amino-acid chain; its full sequence is Aconitate hydratase A (906 aa).

A propeptide spanning residues 1 to 2 is cleaved from the precursor; it reads MS. Residues Cys-441, Cys-507, and Cys-510 each coordinate [4Fe-4S] cluster.

Belongs to the aconitase/IPM isomerase family. In terms of assembly, monomer. [4Fe-4S] cluster serves as cofactor.

The enzyme catalyses citrate = D-threo-isocitrate. The catalysed reaction is (2S,3R)-3-hydroxybutane-1,2,3-tricarboxylate = 2-methyl-cis-aconitate + H2O. Its pathway is carbohydrate metabolism; tricarboxylic acid cycle; isocitrate from oxaloacetate: step 2/2. It participates in organic acid metabolism; propanoate degradation. Its function is as follows. Involved in the catabolism of short chain fatty acids (SCFA) via the tricarboxylic acid (TCA)(acetyl degradation route) and probably the 2-methylcitrate cycle I (propionate degradation route). Catalyzes the reversible isomerization of citrate to isocitrate via cis-aconitate. Could catalyze the hydration of 2-methyl-cis-aconitate to yield (2R,3S)-2-methylisocitrate. The apo form of AcnA functions as a RNA-binding regulatory protein. In Deinococcus radiodurans (strain ATCC 13939 / DSM 20539 / JCM 16871 / CCUG 27074 / LMG 4051 / NBRC 15346 / NCIMB 9279 / VKM B-1422 / R1), this protein is Aconitate hydratase A (acn).